Here is a 174-residue protein sequence, read N- to C-terminus: Adenylate kinase (174 aa).

Residues 12–41 (STGDMLRAAIKAGTPLGLEAKKIIDEGGLV) are NMP. AMP is bound by residues Thr-13, Arg-18, 39 to 41 (GLV), 67 to 70 (GFPR), and Gln-74. The segment at 104–141 (GRRVHLASGRTYHVTYNPPKVEGKDDVTGEDLIQRDDD) is LID. Residues Arg-105 and 114–115 (TY) contribute to the ATP site. The AMP site is built by Arg-138 and Arg-149.

Belongs to the adenylate kinase family. In terms of assembly, monomer.

The protein resides in the cytoplasm. The enzyme catalyses AMP + ATP = 2 ADP. It functions in the pathway purine metabolism; AMP biosynthesis via salvage pathway; AMP from ADP: step 1/1. Its function is as follows. Catalyzes the reversible transfer of the terminal phosphate group between ATP and AMP. Plays an important role in cellular energy homeostasis and in adenine nucleotide metabolism. This chain is Adenylate kinase, found in Neisseria flavescens.